Here is a 659-residue protein sequence, read N- to C-terminus: MTVYLPDGKPLELPEGATAKDVARALGEGWERRAVGAIVDGELYDLLKPLPQGAKVRLLTEKDPEFQTLFRHTLAHVLAQAVKEFFREKGYDPESVRLGVGPVIEKGFYYDIEAPEPLSDEDLPAIEAKMREILKRDLPLRRFVLSREEALARYRGKDPYKTELVLEIPEGEEISFYQQGDEAYGFTDLCRGPHVPSTGRIPPHFKLTHVAGAYWRGDENRPMLQRVYGVAFRTAEELKEYLWQLEEAKKRDHRRLGRELELFLIDPLVGKGLVLWLPKGNVVREELMAFMREEQVRRGYQLVTTPHIGSLELYKTSGHYPYYAESQFPPISFKERGEEEEYLLKPMNCPHHIRIYAYRKRSYRELPLRLAEFGTVYRYEKAGELLGLTRVRGFTQDDAHIFCTPEEVKGEFLGVLDLVLKVFATLGLKDYRARIGVRDPKSDKYVGDEAKWALAERQIEEAAAEAGLRYTVEEGDAAFYGPKLDFVVKDALGREWQLGTIQVDYNLPERFGLTYVGKDGEEHRPVMLHRAPFGSLERFIGILIEHFAGDFPLWLAPVQAVVVPVSEKQEDYAREVAGRLKEAGLRAEADTRPERMQARIRDAEVQKVPYILVVGEREKAEGAVSVRRRKKGNLGTMPLAAFLEGALREYRERRLEPVF.

Positions 1–60 (MTVYLPDGKPLELPEGATAKDVARALGEGWERRAVGAIVDGELYDLLKPLPQGAKVRLLT) constitute a TGS domain. Catalytic stretches follow at residues 234–548 (TAEE…EHFA) and 252–552 (DHRR…GDFP). Cys-349, His-400, and His-529 together coordinate Zn(2+).

Belongs to the class-II aminoacyl-tRNA synthetase family. As to quaternary structure, homodimer. The cofactor is Zn(2+).

The protein localises to the cytoplasm. It carries out the reaction tRNA(Thr) + L-threonine + ATP = L-threonyl-tRNA(Thr) + AMP + diphosphate + H(+). Functionally, catalyzes the attachment of threonine to tRNA(Thr) in a two-step reaction: L-threonine is first activated by ATP to form Thr-AMP and then transferred to the acceptor end of tRNA(Thr). Also edits incorrectly charged L-seryl-tRNA(Thr). This chain is Threonine--tRNA ligase, found in Thermus thermophilus (strain ATCC 27634 / DSM 579 / HB8).